A 165-amino-acid chain; its full sequence is SsrA-binding protein (165 aa).

Belongs to the SmpB family.

The protein resides in the cytoplasm. Functionally, required for rescue of stalled ribosomes mediated by trans-translation. Binds to transfer-messenger RNA (tmRNA), required for stable association of tmRNA with ribosomes. tmRNA and SmpB together mimic tRNA shape, replacing the anticodon stem-loop with SmpB. tmRNA is encoded by the ssrA gene; the 2 termini fold to resemble tRNA(Ala) and it encodes a 'tag peptide', a short internal open reading frame. During trans-translation Ala-aminoacylated tmRNA acts like a tRNA, entering the A-site of stalled ribosomes, displacing the stalled mRNA. The ribosome then switches to translate the ORF on the tmRNA; the nascent peptide is terminated with the 'tag peptide' encoded by the tmRNA and targeted for degradation. The ribosome is freed to recommence translation, which seems to be the essential function of trans-translation. The chain is SsrA-binding protein from Prochlorococcus marinus (strain MIT 9515).